The following is a 397-amino-acid chain: CCA-adding enzyme (397 aa).

ATP is bound by residues glycine 27 and arginine 30. Residues glycine 27 and arginine 30 each coordinate CTP. Mg(2+) is bound by residues aspartate 40 and aspartate 42. ATP is bound by residues arginine 111, aspartate 154, arginine 157, arginine 160, and arginine 163. Arginine 111, aspartate 154, arginine 157, arginine 160, and arginine 163 together coordinate CTP.

This sequence belongs to the tRNA nucleotidyltransferase/poly(A) polymerase family. Bacterial CCA-adding enzyme type 3 subfamily. As to quaternary structure, homodimer. It depends on Mg(2+) as a cofactor.

The catalysed reaction is a tRNA precursor + 2 CTP + ATP = a tRNA with a 3' CCA end + 3 diphosphate. The enzyme catalyses a tRNA with a 3' CCA end + 2 CTP + ATP = a tRNA with a 3' CCACCA end + 3 diphosphate. Functionally, catalyzes the addition and repair of the essential 3'-terminal CCA sequence in tRNAs without using a nucleic acid template. Adds these three nucleotides in the order of C, C, and A to the tRNA nucleotide-73, using CTP and ATP as substrates and producing inorganic pyrophosphate. Has no poly(A) polymerase activity. The sequence is that of CCA-adding enzyme from Bacillus subtilis (strain 168).